A 1167-amino-acid polypeptide reads, in one-letter code: Integrin alpha-E (1167 aa).

Residues 1–19 (MKWLFHTLLCMASLKPQGA) form the signal peptide. Topologically, residues 20–1114 (FNLDVDWAWV…IFLKEEETRS (1095 aa)) are extracellular. FG-GAP repeat units lie at residues 27–81 (AWVT…PDEI) and 84–142 (QPVE…LQAQ). Asn51 carries an N-linked (GlcNAc...) asparagine glycan. 2 cysteine pairs are disulfide-bonded: Cys72–Cys83 and Cys130–Cys164. Residues 149-192 (EGFLDPGAHVDSGDYCRSKGGSTGEEKKSARRRRTVEEEDEEED) are X-domain (extra domain). The disordered stretch occupies residues 163–191 (YCRSKGGSTGEEKKSARRRRTVEEEDEEE). A VWFA domain is found at 193–382 (GTEIAIVLDG…SKLQQHIVHM (190 aa)). N-linked (GlcNAc...) asparagine glycans are attached at residues Asn256, Asn314, Asn341, Asn364, Asn418, and Asn437. One copy of the FG-GAP 3 repeat lies at 383–435 (EGTVGDALQYQLAQTGFSAQILDKGQVLLGTVGAFNWSGGALLYSTQNGRGCF). FG-GAP repeat units follow at residues 438–491 (QTAK…REED), 492–552 (AFVR…DASF), 555–619 (AHTL…GLYD), and 623–683 (QQIR…FTPD). The Ca(2+) site is built by Asp514, Asp516, Asp518, Asp522, Asp578, Asn580, Asp582, Asp586, Asp646, Asn648, Asp650, and Asp654. Cys698 and Cys754 form a disulfide bridge. N-linked (GlcNAc...) asparagine glycosylation is found at Asn718 and Asn773. Residues Cys814 and Cys820 are joined by a disulfide bond. N-linked (GlcNAc...) asparagine glycans are attached at residues Asn829 and Asn846. A disulfide bridge connects residues Cys884 and Cys898. N-linked (GlcNAc...) asparagine glycosylation is found at Asn911, Asn925, Asn968, and Asn1013. 2 cysteine pairs are disulfide-bonded: Cys998/Cys1023 and Cys1031/Cys1047. 2 N-linked (GlcNAc...) asparagine glycosylation sites follow: Asn1055 and Asn1086. The helical transmembrane segment at 1115 to 1137 (LPLIIGSSIGGLLVLVVIIAILF) threads the bilayer. Residues 1138-1167 (KCGFFKRKYQQLNLESTRRAQLKADSLLQD) lie on the Cytoplasmic side of the membrane. The short motif at 1140 to 1144 (GFFKR) is the GFFKR motif element.

It belongs to the integrin alpha chain family. As to quaternary structure, heterodimer of an alpha and a beta subunit. The alpha subunit is composed of a heavy and a light chains linked by a disulfide bond. Alpha-E associates with beta-7.

The protein resides in the membrane. Its function is as follows. Integrin alpha-E/beta-7 is a receptor for E-cadherin. It mediates adhesion of intra-epithelial T-lymphocytes to epithelial cell monolayers. Mice expressing a null mutation of the alpha-E subunit gene exhibit a marked reduction in the numbers of intraepithelial lymphocytes in the gut and in the development of gut-associated lymphoid aggregates, supporting a specific role for this integrin in mediating retention of lymphocytes in the intestinal wall. This Mus musculus (Mouse) protein is Integrin alpha-E (Itgae).